The primary structure comprises 348 residues: N-acetyl-gamma-glutamyl-phosphate reductase (348 aa).

Cysteine 149 is a catalytic residue.

It belongs to the NAGSA dehydrogenase family. Type 1 subfamily.

Its subcellular location is the cytoplasm. It catalyses the reaction N-acetyl-L-glutamate 5-semialdehyde + phosphate + NADP(+) = N-acetyl-L-glutamyl 5-phosphate + NADPH + H(+). Its pathway is amino-acid biosynthesis; L-arginine biosynthesis; N(2)-acetyl-L-ornithine from L-glutamate: step 3/4. Catalyzes the NADPH-dependent reduction of N-acetyl-5-glutamyl phosphate to yield N-acetyl-L-glutamate 5-semialdehyde. This chain is N-acetyl-gamma-glutamyl-phosphate reductase, found in Cellvibrio japonicus (strain Ueda107) (Pseudomonas fluorescens subsp. cellulosa).